A 347-amino-acid polypeptide reads, in one-letter code: Acetylglutamate kinase, chloroplastic (347 aa).

The transit peptide at 1–50 (MATVTSNASPKSFSFTVSNPFKTLIPNKSPSLCYPTRNKNHHRLGFSIKA) directs the protein to the chloroplast. An N-acetylthreonine modification is found at threonine 51. Residue 94–95 (GA) participates in ATP binding. Residues glycine 126, arginine 148, and 242–245 (NINA) contribute to the N-acetyl-L-glutamate site. Lysine 260 contacts L-arginine. Residues 265–266 (TD) and leucine 271 each bind ATP. Residue lysine 282 participates in L-arginine binding. Position 297 to 305 (297 to 305 (KVAGGMIPK)) interacts with ATP. L-arginine is bound by residues 334–337 (EIMS) and glycine 342.

It belongs to the acetylglutamate kinase family. ArgB subfamily. In terms of assembly, interacts with GLB1. Interaction is dependent of MgATP and inhibited by 2-oxoglutarate, arginine, glutamate, citrate, and oxaloacetate.

It localises to the plastid. Its subcellular location is the chloroplast stroma. The enzyme catalyses N-acetyl-L-glutamate + ATP = N-acetyl-L-glutamyl 5-phosphate + ADP. The protein operates within amino-acid biosynthesis; L-arginine biosynthesis; N(2)-acetyl-L-ornithine from L-glutamate: step 2/4. Its activity is regulated as follows. Inhibited by arginine. Inhibition is relieved by binding to GLB1. Its function is as follows. Involved in the arginine biosynthetic pathway via the intermediate compound ornithine. The chain is Acetylglutamate kinase, chloroplastic from Arabidopsis thaliana (Mouse-ear cress).